Reading from the N-terminus, the 329-residue chain is Coiled-coil domain-containing protein 54 (329 aa).

A coiled-coil region spans residues 86-149 (NIVSSISNIQ…VTELESQNSY (64 aa)). The span at 178-191 (TPKGTATSPDTVIS) shows a compositional bias: polar residues. A disordered region spans residues 178-214 (TPKGTATSPDTVISSAEPERVSSYPEPTGELKKKTTS). Phosphothreonine is present on Thr-182.

The sequence is that of Coiled-coil domain-containing protein 54 (Ccdc54) from Mus musculus (Mouse).